A 239-amino-acid chain; its full sequence is Ribonuclease 3 (239 aa).

Positions 12 to 137 (RLTLEAAIGH…LIAALYLDGG (126 aa)) constitute an RNase III domain. E50 lines the Mg(2+) pocket. D54 is a catalytic residue. Positions 123 and 126 each coordinate Mg(2+). E126 is an active-site residue. The region spanning 162–231 (DAKTELQEWA…ATRILEREGI (70 aa)) is the DRBM domain.

It belongs to the ribonuclease III family. As to quaternary structure, homodimer. Requires Mg(2+) as cofactor.

It localises to the cytoplasm. The enzyme catalyses Endonucleolytic cleavage to 5'-phosphomonoester.. Its function is as follows. Digests double-stranded RNA. Involved in the processing of primary rRNA transcript to yield the immediate precursors to the large and small rRNAs (23S and 16S). Processes some mRNAs, and tRNAs when they are encoded in the rRNA operon. Processes pre-crRNA and tracrRNA of type II CRISPR loci if present in the organism. This is Ribonuclease 3 from Rhizobium rhizogenes (strain K84 / ATCC BAA-868) (Agrobacterium radiobacter).